A 447-amino-acid polypeptide reads, in one-letter code: Phosphoglucosamine mutase (447 aa).

Ser104 (phosphoserine intermediate) is an active-site residue. Mg(2+)-binding residues include Ser104, Asp243, Asp245, and Asp247. Phosphoserine is present on Ser104.

This sequence belongs to the phosphohexose mutase family. Mg(2+) serves as cofactor. Activated by phosphorylation.

It carries out the reaction alpha-D-glucosamine 1-phosphate = D-glucosamine 6-phosphate. Catalyzes the conversion of glucosamine-6-phosphate to glucosamine-1-phosphate. The protein is Phosphoglucosamine mutase of Corynebacterium aurimucosum (strain ATCC 700975 / DSM 44827 / CIP 107346 / CN-1) (Corynebacterium nigricans).